The sequence spans 163 residues: Nucleotide-binding protein GWCH70_0711 (163 aa).

The protein belongs to the YajQ family.

Functionally, nucleotide-binding protein. The chain is Nucleotide-binding protein GWCH70_0711 from Geobacillus sp. (strain WCH70).